We begin with the raw amino-acid sequence, 267 residues long: Beta-lactamase OXA-5 (267 aa).

Positions 1–19 (MKTIAAYLVLVFYASTALS) are cleaved as a signal peptide. Serine 67 functions as the Acyl-ester intermediate in the catalytic mechanism. An N6-carboxylysine modification is found at lysine 70. Residue 205–207 (KTG) participates in substrate binding.

The protein belongs to the class-D beta-lactamase family.

It carries out the reaction a beta-lactam + H2O = a substituted beta-amino acid. With respect to regulation, inhibited by clavulanic acid. Functionally, hydrolyzes both oxacillin and methicillin. This Pseudomonas aeruginosa protein is Beta-lactamase OXA-5 (bla).